The following is a 286-amino-acid chain: Phosphatidylglycerol--prolipoprotein diacylglyceryl transferase (286 aa).

The next 4 helical transmembrane spans lie at 25–45 (WYAL…RMLL), 65–85 (FILW…VLFY), 103–123 (GGMS…LFGW), and 127–147 (VPIL…LFLG). R148 lines the a 1,2-diacyl-sn-glycero-3-phospho-(1'-sn-glycerol) pocket. Helical transmembrane passes span 188 to 208 (AGLE…AGAL), 212 to 232 (GLII…GEFF), and 248 to 268 (MGML…ITTW).

Belongs to the Lgt family.

Its subcellular location is the cell inner membrane. It carries out the reaction L-cysteinyl-[prolipoprotein] + a 1,2-diacyl-sn-glycero-3-phospho-(1'-sn-glycerol) = an S-1,2-diacyl-sn-glyceryl-L-cysteinyl-[prolipoprotein] + sn-glycerol 1-phosphate + H(+). Its pathway is protein modification; lipoprotein biosynthesis (diacylglyceryl transfer). In terms of biological role, catalyzes the transfer of the diacylglyceryl group from phosphatidylglycerol to the sulfhydryl group of the N-terminal cysteine of a prolipoprotein, the first step in the formation of mature lipoproteins. This chain is Phosphatidylglycerol--prolipoprotein diacylglyceryl transferase, found in Rhodopseudomonas palustris (strain ATCC BAA-98 / CGA009).